The primary structure comprises 350 residues: Fe(3+) ions import ATP-binding protein FbpC (350 aa).

The ABC transporter domain maps to 4 to 236 (LDIINLSKSF…PNDEQTAHFL (233 aa)). ATP is bound at residue 36-43 (GPSGSGKT).

This sequence belongs to the ABC transporter superfamily. Fe(3+) ion importer (TC 3.A.1.10) family. The complex is composed of two ATP-binding proteins (FbpC), two transmembrane proteins (FbpB) and a solute-binding protein (FbpA).

It localises to the cell inner membrane. It catalyses the reaction Fe(3+)(out) + ATP + H2O = Fe(3+)(in) + ADP + phosphate + H(+). Functionally, part of the ABC transporter complex FbpABC involved in Fe(3+) ions import. Responsible for energy coupling to the transport system. The sequence is that of Fe(3+) ions import ATP-binding protein FbpC from Pseudomonas fluorescens (strain Pf0-1).